A 344-amino-acid chain; its full sequence is MITQRQNDILNLIVELFTQTHEPVGSKALQRTIDSSSATIRNDMAKLEKLGLLEKAHTSSGRMPSPAGFKYFVEHSLRLDSIDEQDIYHVIKAFDFEAFKLEDMLQKASHILAEMTGYTSVILDVEPARQRLTGFDVVQLSNHDALAVMTLDESKPVTVQFAIPRNFLTRDLIAFKAIVEERLLDNSVIDIHYKLRTEIPQIVQKYFVTTDNVLQLFDYVFSELFLETVFVAGKVNSLTYSDLSTYQFLDNEQQVAISLRQSLKEGEMASVQVADSQEAALADVSVLTHKFLIPYRGFGLLSLIGPIDMDYRRSVSLVNIIGKVLAAKLGDYYRYLNSNHYEVH.

Belongs to the HrcA family.

Functionally, negative regulator of class I heat shock genes (grpE-dnaK-dnaJ and groELS operons). Prevents heat-shock induction of these operons. The chain is Heat-inducible transcription repressor HrcA from Streptococcus pyogenes serotype M1.